The primary structure comprises 355 residues: MDTVNNYRVLEHKAAGHDGTLTDGDGLLIFKPAFPQELEFYKAIQVRDVSRRKSSADGDAPLCSWMPTYLGVLNEGAKIEQSGDAALLKIDERLSDSTDNLDSIPVKSEKSKQYLVLENLLYGFSKPNILDIKLGKTLYDSKASLEKRERMKRVSETTTSGSLGFRICGMKIQKNPSVLNQLSLEYYEEEADSDYIFINKLYGRSRTDQNVSDAIELYFNNPHLSDARKHQLKKTFLKRLQLFYNTMLEEEVRMISSSLLFIYEGDPERWELLNDVDKLMRDDFIDDDDDDDDNDDDDDDDAEGSSEGPKDKKTTGSLSSMSLIDFAHSEITPGKGYDENVIEGVETLLDIFMKF.

Met-1 carries the N-acetylmethionine modification. An ATP-binding site is contributed by Lys-31. Phosphoserine is present on Ser-97. Residues 118–120 (ENL) and Asp-131 contribute to the ATP site. A substrate-binding site is contributed by 127–135 (PNILDIKLG). Ca(2+) is bound by residues Glu-271 and Asn-274. The segment covering 284–304 (FIDDDDDDDDNDDDDDDDAEG) has biased composition (acidic residues). A disordered region spans residues 284 to 317 (FIDDDDDDDDNDDDDDDDAEGSSEGPKDKKTTGS). Asp-325 contacts ATP. A Ca(2+)-binding site is contributed by Gly-334.

This sequence belongs to the inositol phosphokinase (IPK) family. Interacts with ARG80 and MCM1. Requires Ca(2+) as cofactor.

It localises to the nucleus. It carries out the reaction 1D-myo-inositol 1,4,5-trisphosphate + 2 ATP = 1D-myo-inositol 1,3,4,5,6-pentakisphosphate + 2 ADP + 2 H(+). The enzyme catalyses 1D-myo-inositol 1,4,5-trisphosphate + ATP = 1D-myo-inositol 1,4,5,6-tetrakisphosphate + ADP + H(+). It catalyses the reaction 1D-myo-inositol 1,4,5-trisphosphate + ATP = 1D-myo-inositol 1,3,4,5-tetrakisphosphate + ADP + H(+). The catalysed reaction is 1D-myo-inositol 1,4,5,6-tetrakisphosphate + ATP = 1D-myo-inositol 1,3,4,5,6-pentakisphosphate + ADP + H(+). It carries out the reaction a 1,2-diacyl-sn-glycero-3-phospho-(1D-myo-inositol-4,5-bisphosphate) + ATP = a 1,2-diacyl-sn-glycero-3-phospho-(1D-myo-inositol-3,4,5-trisphosphate) + ADP + H(+). Functionally, inositol phosphate kinase with both monophosphoinositol and diphosphoinositol polyphosphate synthase activities. Able to phosphorylate inositol 1,4,5-trisphosphate (Ins(1,4,5)P3) on both the carbon-3 and carbon-6 positions to synthesize inositol 1,3,4,5-tetrakisphosphate (Ins(1,3,4,5)P4) and inositol 1,4,5,6-tetrakisphosphate (Ins(1,4,5,6)P4), and then to subsequently phosphorylate and convert either isomer of InsP4 to inositol 1,3,4,5,6-pentakisphosphate (Ins(1,3,4,5,6)P5). Its predominant in vivo catalytic function is to convert Ins(1,4,5)P3 to Ins(1,4,5,6)P4 to Ins(1,3,4,5,6)P5 via 6- and 3-kinase activities. It can also use Ins(1,3,4,5,6)P5 as a substrate and act as a diphosphoinositol polyphosphate synthase to generate two different isomers of PP-InsP4. Also has a role in transcription regulation. Forms a complex with ARG80, ARG81 and MCM1 (ArgR-MCM1), which coordinates the expression of arginine anabolic and catabolic genes in response to arginine. Recruits ARG80 and MCM21 to stabilize them. Neither the kinase activity nor inositol phosphates are required for the formation of ArgR-MCM1 transcriptional complexes on DNA promoter elements and the control of arginine metabolism. In contrast, only the catalytic activity is required for PHO gene repression by phosphate and for NCR gene activation in response to nitrogen availability, indicating a role for inositol pyrophosphates in these controls. Inositol polyphosphates may be involved in the regulation of chromatin remodeling of transcription. Regulates nuclear mRNA export via inositol phosphate metabolism. Also has lipid kinase activity, transforming the lipid inositol phosphatidylinositol 4,5-bisphosphate (PI(4,5)P2) into phosphatidylinositol 3,4,5-trisphosphate (PI(3,4,5)P3) in the nucleus. Its kinase activity is necessary for the propagation of most [PSI+] prion variants. The polypeptide is Inositol polyphosphate multikinase (ARG82) (Saccharomyces cerevisiae (strain ATCC 204508 / S288c) (Baker's yeast)).